Consider the following 396-residue polypeptide: Ribosomal RNA large subunit methyltransferase I (396 aa).

In terms of domain architecture, PUA spans 2–81 (SVRLVLAKGR…ESIDIAFFSR (80 aa)).

It belongs to the methyltransferase superfamily. RlmI family.

Its subcellular location is the cytoplasm. The enzyme catalyses cytidine(1962) in 23S rRNA + S-adenosyl-L-methionine = 5-methylcytidine(1962) in 23S rRNA + S-adenosyl-L-homocysteine + H(+). Specifically methylates the cytosine at position 1962 (m5C1962) of 23S rRNA. The chain is Ribosomal RNA large subunit methyltransferase I from Shigella boydii serotype 4 (strain Sb227).